Consider the following 25-residue polypeptide: Alanine racemase (25 aa).

Belongs to the alanine racemase family. Homodimer. Requires pyridoxal 5'-phosphate as cofactor.

The catalysed reaction is L-alanine = D-alanine. It functions in the pathway amino-acid biosynthesis; D-alanine biosynthesis; D-alanine from L-alanine: step 1/1. In terms of biological role, catalyzes the interconversion of L-alanine and D-alanine. In Pseudomonas fluorescens, this protein is Alanine racemase.